A 367-amino-acid chain; its full sequence is Alanine racemase (367 aa).

Lys34 acts as the Proton acceptor; specific for D-alanine in catalysis. An N6-(pyridoxal phosphate)lysine modification is found at Lys34. Arg131 is a binding site for substrate. Residue Tyr258 is the Proton acceptor; specific for L-alanine of the active site. Met306 is a substrate binding site.

It belongs to the alanine racemase family. Requires pyridoxal 5'-phosphate as cofactor.

It catalyses the reaction L-alanine = D-alanine. Its pathway is amino-acid biosynthesis; D-alanine biosynthesis; D-alanine from L-alanine: step 1/1. Its function is as follows. Catalyzes the interconversion of L-alanine and D-alanine. May also act on other amino acids. The polypeptide is Alanine racemase (alr) (Corynebacterium efficiens (strain DSM 44549 / YS-314 / AJ 12310 / JCM 11189 / NBRC 100395)).